Consider the following 319-residue polypeptide: Glutathione synthetase (319 aa).

Residues 125-311 (KLFTAWFPEL…ITGMLMDAIE (187 aa)) form the ATP-grasp domain. 151 to 207 (HQEHGDIILKPLDGMGGTSIFRVKQDDPNLSVIIETLTELSSRFCMAQNFLPAIKEG) is an ATP binding site. Mg(2+) is bound by residues Glu281 and Asn283.

The protein belongs to the prokaryotic GSH synthase family. It depends on Mg(2+) as a cofactor. Mn(2+) serves as cofactor.

The catalysed reaction is gamma-L-glutamyl-L-cysteine + glycine + ATP = glutathione + ADP + phosphate + H(+). The protein operates within sulfur metabolism; glutathione biosynthesis; glutathione from L-cysteine and L-glutamate: step 2/2. The polypeptide is Glutathione synthetase (Yersinia pestis).